Here is a 137-residue protein sequence, read N- to C-terminus: Large ribosomal subunit protein uL16 (137 aa).

Belongs to the universal ribosomal protein uL16 family. In terms of assembly, part of the 50S ribosomal subunit.

Its function is as follows. Binds 23S rRNA and is also seen to make contacts with the A and possibly P site tRNAs. In Pseudomonas entomophila (strain L48), this protein is Large ribosomal subunit protein uL16.